A 612-amino-acid chain; its full sequence is Sulfite reductase [NADPH] hemoprotein beta-component (612 aa).

A disordered region spans residues 1–32 (MDDHKPIDTPDGPAVDTPGIGAHRYEAPPTDR). [4Fe-4S] cluster is bound by residues C469, C475, C514, and C518. C518 provides a ligand contact to siroheme.

Belongs to the nitrite and sulfite reductase 4Fe-4S domain family. In terms of assembly, alpha(8)-beta(8). The alpha component is a flavoprotein, the beta component is a hemoprotein. Siroheme is required as a cofactor. The cofactor is [4Fe-4S] cluster.

It catalyses the reaction hydrogen sulfide + 3 NADP(+) + 3 H2O = sulfite + 3 NADPH + 4 H(+). The protein operates within sulfur metabolism; hydrogen sulfide biosynthesis; hydrogen sulfide from sulfite (NADPH route): step 1/1. In terms of biological role, component of the sulfite reductase complex that catalyzes the 6-electron reduction of sulfite to sulfide. This is one of several activities required for the biosynthesis of L-cysteine from sulfate. The polypeptide is Sulfite reductase [NADPH] hemoprotein beta-component (Methylorubrum populi (strain ATCC BAA-705 / NCIMB 13946 / BJ001) (Methylobacterium populi)).